The following is a 542-amino-acid chain: Phosphoenolpyruvate carboxykinase (ATP) (542 aa).

Substrate contacts are provided by Arg67, Tyr208, and Lys214. ATP-binding positions include Lys214, His233, and 249-257; that span reads GLSGTGKTT. Mn(2+) contacts are provided by Lys214 and His233. Mn(2+) is bound at residue Asp270. ATP-binding positions include Glu298, Arg334, 450–451, and Thr456; that span reads RI. Residue Arg334 participates in substrate binding.

It belongs to the phosphoenolpyruvate carboxykinase (ATP) family. In terms of assembly, monomer. Requires Mn(2+) as cofactor.

It is found in the cytoplasm. The enzyme catalyses oxaloacetate + ATP = phosphoenolpyruvate + ADP + CO2. It functions in the pathway carbohydrate biosynthesis; gluconeogenesis. Functionally, involved in the gluconeogenesis. Catalyzes the conversion of oxaloacetate (OAA) to phosphoenolpyruvate (PEP) through direct phosphoryl transfer between the nucleoside triphosphate and OAA. In Vibrio cholerae serotype O1 (strain ATCC 39541 / Classical Ogawa 395 / O395), this protein is Phosphoenolpyruvate carboxykinase (ATP).